The sequence spans 89 residues: Small ribosomal subunit protein bS20 (89 aa).

The protein belongs to the bacterial ribosomal protein bS20 family.

Its function is as follows. Binds directly to 16S ribosomal RNA. This chain is Small ribosomal subunit protein bS20, found in Sulfurovum sp. (strain NBC37-1).